We begin with the raw amino-acid sequence, 361 residues long: CRISPR system associated protein Cas8 (361 aa).

As to quaternary structure, monomer. Can form a Cascade complex with Csa5, Cas7, Cas5a, Cas3 and Cas3'.

In terms of biological role, CRISPR (clustered regularly interspaced short palindromic repeat) is an adaptive immune system that provides protection against mobile genetic elements (viruses, transposable elements and conjugative plasmids). CRISPR clusters contain sequences complementary to antecedent mobile elements and target invading nucleic acids. CRISPR clusters are transcribed and processed into CRISPR RNA (crRNA). The sequence is that of CRISPR system associated protein Cas8 (cas8a2) from Thermoproteus tenax (strain ATCC 35583 / DSM 2078 / JCM 9277 / NBRC 100435 / Kra 1).